Here is a 153-residue protein sequence, read N- to C-terminus: Cyanate hydratase (153 aa).

Residues arginine 88, glutamate 91, and serine 114 contribute to the active site.

Belongs to the cyanase family.

The enzyme catalyses cyanate + hydrogencarbonate + 3 H(+) = NH4(+) + 2 CO2. Catalyzes the reaction of cyanate with bicarbonate to produce ammonia and carbon dioxide. This chain is Cyanate hydratase, found in Mycolicibacterium vanbaalenii (strain DSM 7251 / JCM 13017 / BCRC 16820 / KCTC 9966 / NRRL B-24157 / PYR-1) (Mycobacterium vanbaalenii).